The chain runs to 164 residues: SsrA-binding protein (164 aa).

This sequence belongs to the SmpB family.

It is found in the cytoplasm. In terms of biological role, required for rescue of stalled ribosomes mediated by trans-translation. Binds to transfer-messenger RNA (tmRNA), required for stable association of tmRNA with ribosomes. tmRNA and SmpB together mimic tRNA shape, replacing the anticodon stem-loop with SmpB. tmRNA is encoded by the ssrA gene; the 2 termini fold to resemble tRNA(Ala) and it encodes a 'tag peptide', a short internal open reading frame. During trans-translation Ala-aminoacylated tmRNA acts like a tRNA, entering the A-site of stalled ribosomes, displacing the stalled mRNA. The ribosome then switches to translate the ORF on the tmRNA; the nascent peptide is terminated with the 'tag peptide' encoded by the tmRNA and targeted for degradation. The ribosome is freed to recommence translation, which seems to be the essential function of trans-translation. In Shewanella woodyi (strain ATCC 51908 / MS32), this protein is SsrA-binding protein.